Here is a 1892-residue protein sequence, read N- to C-terminus: MMILKSFIPGNLISLYMTIINSVVMVGLYYGFLTTLSIGPSYIFLLRARFMEEGEEGTEKRVSATTGFIAGQLMMFISIYYVPLHLALGKPHTITVLALPYLLFHFFWNNHKDFFDHRRPTRNSMRNLSIQCVFLNNLIIQLFNHFILPSSMLARLVNIYMFRCNNNMLFVTSSFVGWLIGHILLMKWVGLVLVWIQQNNLIRSNVLIRSNKYLVSEFRNSMARIFSILLFITCVYYLGRIPSPILTKKLKGISEPEEVGESEEERNIEIETISEGGGANQKQGTEENTSSSLFSEEEVDPSKETEKLRVTGKKKKKIKGEFHFRFKETYYKNRPVYETSYLDGNQESSKLEILKKKEDKYLLWIEKPLVTLLFDSKRWNRPLRYIKNDRVENAIKNEMSQYFFYTCQSDGKEKISFTYPPSLATFGEMIQKKIYFFTPEKWFSDELYTDWSFINELKRRNLSKEFIKRVESLDKESFDLGILEKRTRFSNNETKREYLPKLYDPFLHGPYRGRIKKWGSPLSINQTYKKKNTDPFWINKIHALLLTTDYHDLEQTLDTLNIKSLATEKELSLLTLTEDEQGNIDSEDRVKILKFLFNIVITNPNNQTIRKKSIGIKEISKKVPRWSYKLIDDLEQQEGENEENVTAEHEIRSRKSKRVVIFTNNQANADTYTNTKDANDPDQTDEVALIRYSQQSDFRRDIIKGSMRAQRRKTITWELFQANVHSPLFLDRVDKPLFFSFDISGPLKRISRNWICKNKESKISDYTEKKIEKKDEAKREKYKREEKMRIEIAEAWDSLLLAQVIRGSVLITQSILRKYIILPSLIIVKNIARMLLFQFPEWSEDLTDWNREMHVKCTYNGVQLSETEFPKNWLTDGIQIKILFPFCLKPWHRFKLQPSHKDPMKKKKGQKNDFCFLTVWGMETELPFGSPRKRRSFFEPIFKELKKKIKKWKTKCFIALTILKEKTKLFRKASKETKKWITQSILFLKGIIKELSKINPIPFFGLREPYELGETKKDSIISNKMIHKSSLQIQSMAWTNYSLTEKKIKDLTKRTNTIKNQIQKILIIKDKKNEFLTQEINSSSNKISYQDKILESSKKFWQIVKRRNIRLIRKFYFFINFFIEKIYMDILLYIINIPRTNTQLFLESTKKMIENFIHNNEANQERINKTTKNTTHFISTIKTSLSSLSNISIRNKNEKAFCDLSSLSQAYVFYKLSQTQVISFYKFKPILQYHGTSLFLKNEIKDYFEERGVSHSRLRHHYGLRQKIVWHSGMNEWKNWLRSRYQYDLVQNRWLKLGPGQWRNRVNQHYLAQNKHLTKWDSDEKERLIHYEKKNDFQANSLLTQEYKLNQEQKYKKSNFKKHYGYDFLSYKSINYQDKRDPYAYGSPFQVNKREESSYHYNMDKQNFFDTLRDIPIHNYLGEGDILDAMGNFSHRKFFNWRILDFCLRNKVDIESWVDTSTKSKKNIKTVVKNYQIIDKMDLFYFTIYQDQESNPSNKKGSHFDWMGLNEEILSHPIPNLELWFFPEFVLLYNAYKVKPWIIPIKLLLFNFNGNRNINQNIIENKKRDSLIAPNEKQIIGLENRNQEEKEPIGEGGLVSDAQKQGNFKSVLSNQEKDVEEDYDKSDKKKRRKKKQYKSNTEAELDFFLKRYLRFQLRWDDSLNQRIINNIKVYCLLLRLINPNEIVISSIQRGEMNLDILMIQKDLTLRELMKKGILIIDPVRLSVKNDGQFILYQTISILLVHKNKHQINQRYQEKNYIDKNHFYEFIARHQKMTENKDKNHYDLFVPENILSPNHRRELRIRISFNSRDKNGMHRNAVFLNNVKNCGQVLTKNKHLDSDKKKLIKLKFFLWPNYRLEDLACMNRYWFNTNNGSRFSMIRIRMYPRLKIR.

Transmembrane regions (helical) follow at residues 12 to 32 (LISL…YYGF), 68 to 88 (FIAG…HLAL), 89 to 109 (GKPH…FFWN), 128 to 148 (LSIQ…HFIL), 176 to 196 (VGWL…LVWI), and 225 to 245 (IFSI…PSPI). A compositionally biased stretch (acidic residues) spans 256–266 (PEEVGESEEER). A disordered region spans residues 256–299 (PEEVGESEEERNIEIETISEGGGANQKQGTEENTSSSLFSEEEV). Positions 280-294 (NQKQGTEENTSSSLF) are enriched in polar residues. The helical transmembrane segment at 1115-1135 (FYFFINFFIEKIYMDILLYII) threads the bilayer. Residues 1613–1636 (SNQEKDVEEDYDKSDKKKRRKKKQ) are disordered.

This sequence belongs to the TIC214 family. As to quaternary structure, part of the Tic complex.

The protein localises to the plastid. It is found in the chloroplast inner membrane. Functionally, involved in protein precursor import into chloroplasts. May be part of an intermediate translocation complex acting as a protein-conducting channel at the inner envelope. This is Protein TIC 214 from Gossypium hirsutum (Upland cotton).